Consider the following 541-residue polypeptide: Glucose-6-phosphate isomerase (541 aa).

Catalysis depends on E354, which acts as the Proton donor. Active-site residues include H385 and K505.

It belongs to the GPI family.

The protein localises to the cytoplasm. It carries out the reaction alpha-D-glucose 6-phosphate = beta-D-fructose 6-phosphate. Its pathway is carbohydrate biosynthesis; gluconeogenesis. It functions in the pathway carbohydrate degradation; glycolysis; D-glyceraldehyde 3-phosphate and glycerone phosphate from D-glucose: step 2/4. Its function is as follows. Catalyzes the reversible isomerization of glucose-6-phosphate to fructose-6-phosphate. This Cupriavidus metallidurans (strain ATCC 43123 / DSM 2839 / NBRC 102507 / CH34) (Ralstonia metallidurans) protein is Glucose-6-phosphate isomerase.